An 873-amino-acid polypeptide reads, in one-letter code: Leucine--tRNA ligase (873 aa).

Residues 42–52 (PYPSGKLHMGH) carry the 'HIGH' region motif. Positions 628-632 (KMAKS) match the 'KMSKS' region motif. K631 serves as a coordination point for ATP.

Belongs to the class-I aminoacyl-tRNA synthetase family.

It is found in the cytoplasm. The catalysed reaction is tRNA(Leu) + L-leucine + ATP = L-leucyl-tRNA(Leu) + AMP + diphosphate. This is Leucine--tRNA ligase from Aromatoleum aromaticum (strain DSM 19018 / LMG 30748 / EbN1) (Azoarcus sp. (strain EbN1)).